The following is a 256-amino-acid chain: Adenosylcobinamide-GDP ribazoletransferase (256 aa).

6 helical membrane passes run 40 to 60, 64 to 84, 114 to 134, 143 to 163, 194 to 214, and 234 to 254; these read YFPLIGWLVGAVAAAVYWLVL, PAQGVAVAVSMGATLLLTGAF, IGAFGAIAVCMALLLKWQLLS, ILVAMVAAHAASRAAAVSHLL, VVPLLWFGPMCAALIVVGLIL, and CLGMAQQIFELLILWGLLAWM.

The protein belongs to the CobS family. Mg(2+) is required as a cofactor.

The protein localises to the cell inner membrane. It carries out the reaction alpha-ribazole + adenosylcob(III)inamide-GDP = adenosylcob(III)alamin + GMP + H(+). It catalyses the reaction alpha-ribazole 5'-phosphate + adenosylcob(III)inamide-GDP = adenosylcob(III)alamin 5'-phosphate + GMP + H(+). Its pathway is cofactor biosynthesis; adenosylcobalamin biosynthesis; adenosylcobalamin from cob(II)yrinate a,c-diamide: step 7/7. Its function is as follows. Joins adenosylcobinamide-GDP and alpha-ribazole to generate adenosylcobalamin (Ado-cobalamin). Also synthesizes adenosylcobalamin 5'-phosphate from adenosylcobinamide-GDP and alpha-ribazole 5'-phosphate. In Ralstonia pickettii (strain 12J), this protein is Adenosylcobinamide-GDP ribazoletransferase.